The sequence spans 230 residues: Enolase-phosphatase E1 (230 aa).

The protein belongs to the HAD-like hydrolase superfamily. MasA/MtnC family. Monomer. Mg(2+) is required as a cofactor.

The enzyme catalyses 5-methylsulfanyl-2,3-dioxopentyl phosphate + H2O = 1,2-dihydroxy-5-(methylsulfanyl)pent-1-en-3-one + phosphate. It functions in the pathway amino-acid biosynthesis; L-methionine biosynthesis via salvage pathway; L-methionine from S-methyl-5-thio-alpha-D-ribose 1-phosphate: step 3/6. It participates in amino-acid biosynthesis; L-methionine biosynthesis via salvage pathway; L-methionine from S-methyl-5-thio-alpha-D-ribose 1-phosphate: step 4/6. Bifunctional enzyme that catalyzes the enolization of 2,3-diketo-5-methylthiopentyl-1-phosphate (DK-MTP-1-P) into the intermediate 2-hydroxy-3-keto-5-methylthiopentenyl-1-phosphate (HK-MTPenyl-1-P), which is then dephosphorylated to form the acireductone 1,2-dihydroxy-3-keto-5-methylthiopentene (DHK-MTPene). The polypeptide is Enolase-phosphatase E1 (Marinobacter nauticus (strain ATCC 700491 / DSM 11845 / VT8) (Marinobacter aquaeolei)).